The chain runs to 837 residues: Vacuolar membrane protease (837 aa).

Topologically, residues 1–36 (MSEEEVHDTSSEASEVFTNQPNAFVRGVRSIFGYRK) are cytoplasmic. The helical transmembrane segment at 37–57 (TSLTLFVILTIVVTAGLSFYD) threads the bilayer. Residues 58–355 (NSLELTIELP…FATPISALAR (298 aa)) are Vacuolar-facing. A glycan (N-linked (GlcNAc...) asparagine) is linked at Asn-143. Zn(2+)-binding residues include His-157 and Asp-169. Glu-201 serves as the catalytic Proton acceptor. The Zn(2+) site is built by Glu-202, Glu-227, and His-299. A helical membrane pass occupies residues 356-376 (VNLVLLVLFPVVSTPLLFVIV). Residues 377-384 (KYKKWKLR) are Cytoplasmic-facing. The helical transmembrane segment at 385 to 405 (VTNFLGVPLAMGLAVAVGQVG) threads the bilayer. Residues 406–415 (NPMLVSSHPM) lie on the Vacuolar side of the membrane. Residues 416–436 (MVVATTTSIVVLVYYVVLNGV) traverse the membrane as a helical segment. Residues 437–446 (DWVNTSSDQK) lie on the Cytoplasmic side of the membrane. The helical transmembrane segment at 447-467 (LVTMIEVSFVYWVVLVYVTWS) threads the bilayer. Residues 468 to 474 (GGDHTGE) lie on the Vacuolar side of the membrane. A helical membrane pass occupies residues 475 to 495 (FGVTVLFFVQASTSLLGLIGW). Residues 496–539 (TFTRVRGGDEPLLSGEEERYGTEDERDTEKPLVEHNYDWSLQYL) lie on the Cytoplasmic side of the membrane. A helical membrane pass occupies residues 540-560 (LIVPVSSLVVYNSGWLVLEGV). Asn-561 is a glycosylation site (N-linked (GlcNAc...) asparagine). The Vacuolar segment spans residues 561 to 572 (NKTVQESLASEH). The chain crosses the membrane as a helical span at residues 573-593 (LIYWIVVVFSQFLVLPVVPFI). Topologically, residues 594–598 (TKFNR) are cytoplasmic. The helical transmembrane segment at 599–619 (YIVLGLSVVVVVGVLMSMAVH) threads the bilayer. The Vacuolar segment spans residues 620–837 (PFNQGSPMKL…LVGVVKHVDV (218 aa)). The N-linked (GlcNAc...) asparagine glycan is linked to Asn-689.

It belongs to the peptidase M28 family. Zn(2+) serves as cofactor.

It localises to the vacuole membrane. Its function is as follows. May be involved in vacuolar sorting and osmoregulation. In Candida albicans (strain SC5314 / ATCC MYA-2876) (Yeast), this protein is Vacuolar membrane protease.